The primary structure comprises 196 residues: Putative NADH dehydrogenase/NAD(P)H nitroreductase xcc-b100_0585 (196 aa).

The protein belongs to the nitroreductase family. HadB/RutE subfamily. FMN serves as cofactor.

The protein is Putative NADH dehydrogenase/NAD(P)H nitroreductase xcc-b100_0585 of Xanthomonas campestris pv. campestris (strain B100).